Reading from the N-terminus, the 456-residue chain is Probable hexose phosphate transport protein (456 aa).

11 consecutive transmembrane segments (helical) span residues 34–54 (IFYS…SFTF), 70–90 (LGII…VSGV), 113–133 (IFFG…INGW), 161–181 (VWST…GIAI), 185–205 (GWRG…FILI), 257–277 (YVLS…IYVV), 302–322 (LCVS…GWLS), 331–351 (GPMN…LWGT), 362–382 (AFLF…GLAA), 394–414 (ASGF…YPLG), and 421–441 (GWHG…LFFL).

The protein belongs to the major facilitator superfamily. Organophosphate:Pi antiporter (OPA) (TC 2.A.1.4) family.

The protein resides in the cell membrane. Functionally, transport protein for sugar phosphate uptake. The chain is Probable hexose phosphate transport protein from Chlamydia muridarum (strain MoPn / Nigg).